A 96-amino-acid chain; its full sequence is Large ribosomal subunit protein bL21 (96 aa).

Belongs to the bacterial ribosomal protein bL21 family. As to quaternary structure, part of the 50S ribosomal subunit. Contacts protein L20.

In terms of biological role, this protein binds to 23S rRNA in the presence of protein L20. The sequence is that of Large ribosomal subunit protein bL21 from Sulfurihydrogenibium sp. (strain YO3AOP1).